A 492-amino-acid polypeptide reads, in one-letter code: Ferruginol synthase (492 aa).

The helical transmembrane segment at 1 to 21 (METIALLAALFFIALTCFLTS) threads the bilayer. Topologically, residues 22–492 (GRRRNLPPGP…VPLKIIPLRP (471 aa)) are cytoplasmic. Residue Cys-436 participates in heme binding.

The protein belongs to the cytochrome P450 family. Heme serves as cofactor.

The protein localises to the endoplasmic reticulum membrane. The catalysed reaction is abieta-8,11,13-triene + reduced [NADPH--hemoprotein reductase] + O2 = ferruginol + oxidized [NADPH--hemoprotein reductase] + H2O + H(+). The protein operates within secondary metabolite biosynthesis; terpenoid biosynthesis. Cytochrome P450 enzyme (CYP) which catalyzes a unique two-electron oxidation cascade on abieta-8,11,13-triene to produce ferruginol, an intermediate in tanshinone biosynthesis. The chain is Ferruginol synthase from Isodon rubescens (Rabdosia rubescens).